The following is a 353-amino-acid chain: Trans-enoyl reductase fsa3 (353 aa).

Position 45–48 (45–48) interacts with NADP(+); the sequence is VDTK. Substrate is bound at residue 131 to 138; sequence ISFMTTGL. Residues 166–169, 189–192, Tyr207, and 254–255 each bind NADP(+); these read SSAT, SPRN, and LE. Position 275–279 (275–279) interacts with substrate; sequence GPQML. Residue 344 to 345 participates in NADP(+) binding; the sequence is IS.

The protein belongs to the zinc-containing alcohol dehydrogenase family. As to quaternary structure, monomer.

The catalysed reaction is L-serine + 7 malonyl-CoA + acetyl-CoA + 2 S-adenosyl-L-methionine + ATP + 8 NADPH + 11 H(+) = (5S)-3-[(2E,6R,8E,10E,12E)-2,6-dimethyltetradeca-2,8,10,12-tetraenoyl]-5-(hydroxymethyl)pyrrolidine-2,4-dione + AMP + 2 S-adenosyl-L-homocysteine + 7 CO2 + diphosphate + 8 NADP(+) + 8 CoA + 6 H2O. Its pathway is mycotoxin biosynthesis. Trans-enoyl reductase; part of the gene cluster that mediates the biosynthesis of HIV-1 integrase inhibitor equisetin and of fusarisetin A, both trans-fused decalin-containing tetramic acids showing also antimicrobial activity. The PKS module of fsa1 together with the enoylreductase fsa3 catalyze the formation of the polyketide unit which is then conjugated to L-serine by the condensation domain of the fsa1 NRPS module. Activity of the Dieckmann cyclase domain (RED) results in release of the Dieckmann product intermediate. Diels-Alderase fsa2 is involved in endo-selective Diels-Alder cycloaddition to form the decalin ring, leading to the production of N-desmethylequisetin also called trichosetin. Subsequent N-methylation is carried out by fsa4 to give equisetin. The enzymatic gene responsible for the conversion of equisetin to fusarisetin A has not been identified yet and is probably located outside of the fsa cluster. This chain is Trans-enoyl reductase fsa3, found in Fusarium sp. (strain FN080326).